The primary structure comprises 782 residues: Fibrinogen alpha chain (782 aa).

The first 19 residues, 1 to 19, serve as a signal peptide directing secretion; that stretch reads MLSLRVACLILSLASTVWT. A coiled-coil region spans residues 68-547; the sequence is GCRMKGLIDE…KRGRARTMRD (480 aa). The segment covering 264–283 has biased composition (basic and acidic residues); that stretch reads RPGKDGASRGDLPGDSRGDS. Residues 264 to 374 are disordered; it reads RPGKDGASRG…PATRKEYHTG (111 aa). At Ser279 the chain carries Phosphoserine. Gly residues predominate over residues 311–323; sequence SGSGSDGNWGSGT. 2 stretches are compositionally biased toward low complexity: residues 324-344 and 354-364; these read TGSD…SGSG and GEFSEFGGSSS. Residue Ser326 is modified to Phosphoserine. Cys404 and Cys434 form a disulfide bridge. Ser470 carries the post-translational modification Phosphoserine. Residue Pro499 is modified to 4-hydroxyproline; by P4HA1. Residues 522–536 show a composition bias toward basic and acidic residues; that stretch reads DEAASEAHQEGDTRT. Positions 522–542 are disordered; sequence DEAASEAHQEGDTRTTKRGRA. The residue at position 526 (Ser526) is a Phosphoserine. Residues 539–780 form the Fibrinogen C-terminal domain; the sequence is RGRARTMRDC…AVRMKIRPLV (242 aa). N-linked (GlcNAc...) asparagine glycosylation occurs at Asn602. Ca(2+) contacts are provided by Asp707, Asp709, Trp711, and Glu713. Residues Cys715 and Cys728 are joined by a disulfide bond.

Heterohexamer; disulfide linked. Contains 2 sets of 3 non-identical chains (alpha, beta and gamma). The 2 heterotrimers are in head to head conformation with the N-termini in a small central domain. Post-translationally, conversion of fibrinogen to fibrin is triggered by thrombin, which cleaves fibrinopeptides A and B from alpha and beta chains, and thus exposes the N-terminal polymerization sites responsible for the formation of the soft clot. The soft clot is converted into the hard clot by factor XIIIA which catalyzes the epsilon-(gamma-glutamyl)lysine cross-linking between gamma chains (stronger) and between alpha chains (weaker) of different monomers. Forms F13A-mediated cross-links between a glutamine and the epsilon-amino group of a lysine residue, forming fibronectin-fibrinogen heteropolymers. In terms of processing, phosphorylated by FAM20C in the extracellular medium.

The protein resides in the secreted. In terms of biological role, cleaved by the protease thrombin to yield monomers which, together with fibrinogen beta (FGB) and fibrinogen gamma (FGG), polymerize to form an insoluble fibrin matrix. Fibrin has a major function in hemostasis as one of the primary components of blood clots. In addition, functions during the early stages of wound repair to stabilize the lesion and guide cell migration during re-epithelialization. Was originally thought to be essential for platelet aggregation, based on in vitro studies using anticoagulated blood. However, subsequent studies have shown that it is not absolutely required for thrombus formation in vivo. Enhances expression of SELP in activated platelets via an ITGB3-dependent pathway. Maternal fibrinogen is essential for successful pregnancy. Fibrin deposition is also associated with infection, where it protects against IFNG-mediated hemorrhage. May also facilitate the immune response via both innate and T-cell mediated pathways. The polypeptide is Fibrinogen alpha chain (Fga) (Rattus norvegicus (Rat)).